The following is a 203-amino-acid chain: Thymidylate kinase (203 aa).

14-21 contacts ATP; it reads GGEGIGKS.

The protein belongs to the thymidylate kinase family.

It catalyses the reaction dTMP + ATP = dTDP + ADP. Its function is as follows. Phosphorylation of dTMP to form dTDP in both de novo and salvage pathways of dTTP synthesis. The polypeptide is Thymidylate kinase (Rickettsia peacockii (strain Rustic)).